The sequence spans 393 residues: Methylthioribose kinase (393 aa).

Residues Asn-38, Lys-53, and 107–109 (EDL) each bind ATP. Asp-225 contacts substrate. 242–244 (DPE) is an ATP binding site. Arg-332 is a substrate binding site.

The protein belongs to the methylthioribose kinase family. As to quaternary structure, homodimer.

It carries out the reaction 5-(methylsulfanyl)-D-ribose + ATP = 5-(methylsulfanyl)-alpha-D-ribose 1-phosphate + ADP + H(+). The protein operates within amino-acid biosynthesis; L-methionine biosynthesis via salvage pathway; S-methyl-5-thio-alpha-D-ribose 1-phosphate from S-methyl-5'-thioadenosine (hydrolase route): step 2/2. Functionally, catalyzes the phosphorylation of methylthioribose into methylthioribose-1-phosphate. The chain is Methylthioribose kinase from Bacillus cereus (strain 03BB102).